We begin with the raw amino-acid sequence, 401 residues long: Alpha-(1,4)-fucosyltransferase (401 aa).

The Cytoplasmic portion of the chain corresponds to 1–4 (MPMR). Residues 5–27 (YLNAMAALLMMFFTLLILSFTGI) form a helical; Signal-anchor for type II membrane protein membrane-spanning segment. Residues 28-401 (LEFPSASTSM…SRRGGKNAGV (374 aa)) are Lumenal-facing. Asn-85 carries an N-linked (GlcNAc...) asparagine glycan.

It belongs to the glycosyltransferase 10 family. As to expression, present in root, stem, flower buds and green siliques.

It is found in the golgi apparatus. The protein localises to the golgi stack membrane. Its pathway is protein modification; protein glycosylation. In terms of biological role, may be involved in cell wall synthesis. Catalyzes alpha-1,4 glycosidic linkages and generates Lewis-a epitopes. The protein is Alpha-(1,4)-fucosyltransferase (FUT13) of Arabidopsis thaliana (Mouse-ear cress).